A 103-amino-acid chain; its full sequence is Large ribosomal subunit protein uL23 (103 aa).

The protein belongs to the universal ribosomal protein uL23 family. As to quaternary structure, part of the 50S ribosomal subunit. Contacts protein L29, and trigger factor when it is bound to the ribosome.

In terms of biological role, one of the early assembly proteins it binds 23S rRNA. One of the proteins that surrounds the polypeptide exit tunnel on the outside of the ribosome. Forms the main docking site for trigger factor binding to the ribosome. This Chlorobaculum tepidum (strain ATCC 49652 / DSM 12025 / NBRC 103806 / TLS) (Chlorobium tepidum) protein is Large ribosomal subunit protein uL23.